The primary structure comprises 138 residues: Ribosome-binding factor A (138 aa).

The protein belongs to the RbfA family. As to quaternary structure, monomer. Binds 30S ribosomal subunits, but not 50S ribosomal subunits or 70S ribosomes.

It is found in the cytoplasm. In terms of biological role, one of several proteins that assist in the late maturation steps of the functional core of the 30S ribosomal subunit. Associates with free 30S ribosomal subunits (but not with 30S subunits that are part of 70S ribosomes or polysomes). Required for efficient processing of 16S rRNA. May interact with the 5'-terminal helix region of 16S rRNA. In Bradyrhizobium sp. (strain ORS 278), this protein is Ribosome-binding factor A.